The chain runs to 332 residues: Nicotianamine synthase 1 (332 aa).

Belongs to the nicotianamine synthase (NAS)-like family. As to expression, expressed in roots.

The enzyme catalyses 3 S-adenosyl-L-methionine = nicotianamine + 3 S-methyl-5'-thioadenosine + 3 H(+). Functionally, synthesizes nicotianamine, a polyamine that is the first intermediate in the synthesis of the phytosiderophores of the mugineic acid type found in gramineae which serve as a sensor for the physiological iron status within the plant, and/or might be involved in the transport of iron. This Oryza sativa subsp. indica (Rice) protein is Nicotianamine synthase 1 (NAS1).